A 356-amino-acid polypeptide reads, in one-letter code: Outer spore wall protein LDS2 (356 aa).

Residues 1–92 (MSTRPQPDWY…ISESVGNSDY (92 aa)) lie on the Cytoplasmic side of the membrane. Residues 93–113 (LHLFFLIFGYYLLNLLLIVAF) traverse the membrane as a helical segment. The Extracellular portion of the chain corresponds to 114 to 115 (TS). The helical transmembrane segment at 116–136 (ILAWSLLVCIYLPFLGLFALP) threads the bilayer. The Cytoplasmic portion of the chain corresponds to 137 to 213 (LAYMQTILIS…KRFYLVSLPQ (77 aa)). Residues 214-234 (FFIFFFWYIFIAFMFLLLLLV) traverse the membrane as a helical segment. Residues 235–294 (PIVGPITINMLPFSPGMGFYYFEPYFVDVLHLDSRKLSKVYYKGFAKWLLYSISSGLLES) are Extracellular-facing. The helical transmembrane segment at 295-315 (IPILGGLFIGTNAVGASLWIV) threads the bilayer. The Cytoplasmic portion of the chain corresponds to 316–356 (KEIKDRDQPAVPPSPPAEPEEPTVGSYAPPIQQSIAHINPP). Positions 322–356 (DQPAVPPSPPAEPEEPTVGSYAPPIQQSIAHINPP) are disordered. Residues 346 to 356 (IQQSIAHINPP) show a composition bias toward polar residues.

It belongs to the LDS family.

It localises to the prospore membrane. It is found in the lipid droplet. The protein localises to the spore wall. Its function is as follows. Involved in spore wall assembly. The protein is Outer spore wall protein LDS2 of Saccharomyces cerevisiae (strain ATCC 204508 / S288c) (Baker's yeast).